Reading from the N-terminus, the 599-residue chain is NADH-ubiquinone oxidoreductase chain 5 (599 aa).

The next 16 helical transmembrane spans lie at 1-21 (MLEL…IFLF), 28-48 (FAES…ILLM), 81-101 (CFFV…FYYM), 115-135 (GLFL…QLLI), 171-191 (GDIG…DWSF), 193-213 (GLYA…LAAA), 233-253 (TPVS…FLLI), 265-285 (IQLM…ICAL), 302-322 (LGLM…FLHI), 323-343 (CMHA…IHGL), 363-383 (SVCF…AGFF), 398-420 (NSWA…VRLL), 455-475 (VIAG…CLSL), 481-501 (LAAV…VNLL), 510-530 (IPEL…HKLI), and 577-597 (LIKM…GIMI).

It belongs to the complex I subunit 5 family.

Its subcellular location is the mitochondrion inner membrane. It carries out the reaction a ubiquinone + NADH + 5 H(+)(in) = a ubiquinol + NAD(+) + 4 H(+)(out). Its function is as follows. Core subunit of the mitochondrial membrane respiratory chain NADH dehydrogenase (Complex I) that is believed to belong to the minimal assembly required for catalysis. Complex I functions in the transfer of electrons from NADH to the respiratory chain. The immediate electron acceptor for the enzyme is believed to be ubiquinone. This chain is NADH-ubiquinone oxidoreductase chain 5 (ND5), found in Branchiostoma floridae (Florida lancelet).